A 470-amino-acid chain; its full sequence is Ribulose bisphosphate carboxylase large chain (470 aa).

Positions 115 and 165 each coordinate substrate. K167 (proton acceptor) is an active-site residue. K169 contributes to the substrate binding site. Residues K193, D195, and E196 each coordinate Mg(2+). K193 carries the post-translational modification N6-carboxylysine. H286 functions as the Proton acceptor in the catalytic mechanism. R287, H319, and S371 together coordinate substrate.

Belongs to the RuBisCO large chain family. Type I subfamily. As to quaternary structure, heterohexadecamer of 8 large chains and 8 small chains. Requires Mg(2+) as cofactor.

It localises to the carboxysome. It catalyses the reaction 2 (2R)-3-phosphoglycerate + 2 H(+) = D-ribulose 1,5-bisphosphate + CO2 + H2O. The catalysed reaction is D-ribulose 1,5-bisphosphate + O2 = 2-phosphoglycolate + (2R)-3-phosphoglycerate + 2 H(+). Functionally, ruBisCO catalyzes two reactions: the carboxylation of D-ribulose 1,5-bisphosphate, the primary event in carbon dioxide fixation, as well as the oxidative fragmentation of the pentose substrate in the photorespiration process. Both reactions occur simultaneously and in competition at the same active site. This is Ribulose bisphosphate carboxylase large chain from Prochlorococcus marinus (strain MIT 9303).